The primary structure comprises 406 residues: Elongation factor Tu-B (406 aa).

The region spanning 10–215 (KPHVNVGTIG…AIDEYIPTPV (206 aa)) is the tr-type G domain. Residues 19–26 (GHVDHGKT) are G1. 19–26 (GHVDHGKT) serves as a coordination point for GTP. Thr-26 is a Mg(2+) binding site. The segment at 61-65 (GITIN) is G2. The G3 stretch occupies residues 82 to 85 (DCPG). GTP is bound by residues 82–86 (DCPGH) and 137–140 (NKVD). The interval 137 to 140 (NKVD) is G4. The tract at residues 175 to 177 (SAL) is G5. Position 395 is a phosphothreonine (Thr-395).

It belongs to the TRAFAC class translation factor GTPase superfamily. Classic translation factor GTPase family. EF-Tu/EF-1A subfamily. As to quaternary structure, monomer. In terms of processing, phosphorylated on a threonine.

The protein localises to the cytoplasm. The catalysed reaction is GTP + H2O = GDP + phosphate + H(+). In terms of biological role, GTP hydrolase that promotes the GTP-dependent binding of aminoacyl-tRNA to the A-site of ribosomes during protein biosynthesis. Its function is as follows. Protects glycyl-tRNA(Gly) from hydrolysis by E.coli D-aminoacyl-tRNA deacylase (dtd). The sequence is that of Elongation factor Tu-B from Thermus thermophilus (strain ATCC 27634 / DSM 579 / HB8).